The following is a 389-amino-acid chain: Succinate--CoA ligase [ADP-forming] subunit beta (389 aa).

The ATP-grasp domain maps to 9-244; the sequence is KAVLAKYGVP…LTEEDPAEVE (236 aa). Residues lysine 46, 53–55, glutamate 99, serine 102, and glutamate 107 each bind ATP; that span reads GRG. Residues asparagine 199 and aspartate 213 each coordinate Mg(2+). Substrate-binding positions include asparagine 264 and 321 to 323; that span reads GIM.

The protein belongs to the succinate/malate CoA ligase beta subunit family. As to quaternary structure, heterotetramer of two alpha and two beta subunits. Requires Mg(2+) as cofactor.

It carries out the reaction succinate + ATP + CoA = succinyl-CoA + ADP + phosphate. It catalyses the reaction GTP + succinate + CoA = succinyl-CoA + GDP + phosphate. It functions in the pathway carbohydrate metabolism; tricarboxylic acid cycle; succinate from succinyl-CoA (ligase route): step 1/1. In terms of biological role, succinyl-CoA synthetase functions in the citric acid cycle (TCA), coupling the hydrolysis of succinyl-CoA to the synthesis of either ATP or GTP and thus represents the only step of substrate-level phosphorylation in the TCA. The beta subunit provides nucleotide specificity of the enzyme and binds the substrate succinate, while the binding sites for coenzyme A and phosphate are found in the alpha subunit. The sequence is that of Succinate--CoA ligase [ADP-forming] subunit beta from Parvibaculum lavamentivorans (strain DS-1 / DSM 13023 / NCIMB 13966).